Reading from the N-terminus, the 417-residue chain is Serine hydroxymethyltransferase 2 (417 aa).

(6S)-5,6,7,8-tetrahydrofolate contacts are provided by residues Leu-121 and 125 to 127 (GHL). At Lys-230 the chain carries N6-(pyridoxal phosphate)lysine. (6S)-5,6,7,8-tetrahydrofolate is bound at residue 355 to 357 (SPF).

This sequence belongs to the SHMT family. Homodimer. Pyridoxal 5'-phosphate serves as cofactor.

The protein localises to the cytoplasm. It catalyses the reaction (6R)-5,10-methylene-5,6,7,8-tetrahydrofolate + glycine + H2O = (6S)-5,6,7,8-tetrahydrofolate + L-serine. It participates in one-carbon metabolism; tetrahydrofolate interconversion. The protein operates within amino-acid biosynthesis; glycine biosynthesis; glycine from L-serine: step 1/1. Its function is as follows. Catalyzes the reversible interconversion of serine and glycine with tetrahydrofolate (THF) serving as the one-carbon carrier. This reaction serves as the major source of one-carbon groups required for the biosynthesis of purines, thymidylate, methionine, and other important biomolecules. Also exhibits THF-independent aldolase activity toward beta-hydroxyamino acids, producing glycine and aldehydes, via a retro-aldol mechanism. The protein is Serine hydroxymethyltransferase 2 of Pseudomonas syringae pv. syringae (strain B728a).